We begin with the raw amino-acid sequence, 470 residues long: Sulfate adenylyltransferase subunit 1 (470 aa).

One can recognise a tr-type G domain in the interval 22-238 (KELLRFITCG…ETIKIDYAYT (217 aa)). Residues 31 to 38 (GSVDDGKS) form a G1 region. 31 to 38 (GSVDDGKS) contacts GTP. A G2 region spans residues 89 to 93 (GITID). Positions 110–113 (DTPG) are G3. Residues 110–114 (DTPGH) and 165–168 (NKMD) contribute to the GTP site. Residues 165-168 (NKMD) are G4. A G5 region spans residues 202 to 204 (SAL).

This sequence belongs to the TRAFAC class translation factor GTPase superfamily. Classic translation factor GTPase family. CysN/NodQ subfamily. In terms of assembly, heterodimer composed of CysD, the smaller subunit, and CysN.

The catalysed reaction is sulfate + ATP + H(+) = adenosine 5'-phosphosulfate + diphosphate. It functions in the pathway sulfur metabolism; hydrogen sulfide biosynthesis; sulfite from sulfate: step 1/3. In terms of biological role, with CysD forms the ATP sulfurylase (ATPS) that catalyzes the adenylation of sulfate producing adenosine 5'-phosphosulfate (APS) and diphosphate, the first enzymatic step in sulfur assimilation pathway. APS synthesis involves the formation of a high-energy phosphoric-sulfuric acid anhydride bond driven by GTP hydrolysis by CysN coupled to ATP hydrolysis by CysD. The protein is Sulfate adenylyltransferase subunit 1 of Francisella tularensis subsp. tularensis (strain WY96-3418).